A 545-amino-acid polypeptide reads, in one-letter code: 4-coumarate--CoA ligase 1 (545 aa).

ATP-binding residues include serine 192, serine 193, glycine 194, threonine 195, threonine 196, and lysine 200. Residues tyrosine 242 and serine 246 each contribute to the (E)-4-coumaroyl-AMP site. Lysine 263 provides a ligand contact to CoA. Positions 265 to 334 (DIAQFLELIP…AKFPNAKLGQ (70 aa)) are SBD1. Alanine 312, glutamine 334, glycine 335, threonine 339, and methionine 347 together coordinate (E)-4-coumaroyl-AMP. Residues glutamine 334, glycine 335, and threonine 339 each contribute to the ATP site. The SBD2 stretch occupies residues 335–402 (GYGMTEAGPV…IRGDQIMKGY (68 aa)). 2 residues coordinate ATP: aspartate 423 and arginine 438. Positions 440 and 444 each coordinate (E)-4-coumaroyl-AMP. 2 residues coordinate CoA: lysine 446 and glycine 447. Lysine 529 lines the ATP pocket.

The protein belongs to the ATP-dependent AMP-binding enzyme family. It depends on Mg(2+) as a cofactor.

The enzyme catalyses (E)-4-coumarate + ATP + CoA = (E)-4-coumaroyl-CoA + AMP + diphosphate. The catalysed reaction is (E)-4-coumarate + ATP + H(+) = (E)-4-coumaroyl-AMP + diphosphate. It catalyses the reaction (E)-4-coumaroyl-AMP + CoA = (E)-4-coumaroyl-CoA + AMP + H(+). It participates in phytoalexin biosynthesis; 3,4',5-trihydroxystilbene biosynthesis; 3,4',5-trihydroxystilbene from trans-4-coumarate: step 1/2. In terms of biological role, carboxylate--CoA ligase that may use 4-coumarate as substrate. Follows a two-step reaction mechanism, wherein the carboxylate substrate first undergoes adenylation by ATP, followed by a thioesterification in the presence of CoA to yield the final CoA thioester. In Solanum tuberosum (Potato), this protein is 4-coumarate--CoA ligase 1 (4CL1).